The chain runs to 343 residues: S-adenosylmethionine:tRNA ribosyltransferase-isomerase (343 aa).

The protein belongs to the QueA family. Monomer.

The protein resides in the cytoplasm. It carries out the reaction 7-aminomethyl-7-carbaguanosine(34) in tRNA + S-adenosyl-L-methionine = epoxyqueuosine(34) in tRNA + adenine + L-methionine + 2 H(+). The protein operates within tRNA modification; tRNA-queuosine biosynthesis. In terms of biological role, transfers and isomerizes the ribose moiety from AdoMet to the 7-aminomethyl group of 7-deazaguanine (preQ1-tRNA) to give epoxyqueuosine (oQ-tRNA). This is S-adenosylmethionine:tRNA ribosyltransferase-isomerase from Pseudoalteromonas translucida (strain TAC 125).